The primary structure comprises 568 residues: Kinetochore protein NDC80 homolog (568 aa).

The disordered stretch occupies residues 1–59 (MRGGAAGKRRTTVGFGGAPPPPPPSIEQQRHLFNSRDSDASFASSRPSSIGLGGRGASD). Positions 28–39 (QQRHLFNSRDSD) are enriched in basic and acidic residues. Low complexity predominate over residues 40–49 (ASFASSRPSS). 2 coiled-coil regions span residues 241–334 (KESL…AEVA) and 433–469 (IESK…TKCD).

The protein belongs to the NDC80/HEC1 family. Component of the NDC80 complex, which consists of NDC80, NUF2, SPC24 and SPC25.

It localises to the chromosome. Its subcellular location is the centromere. Acts as a component of the essential kinetochore-associated NDC80 complex, which is required for chromosome segregation and spindle checkpoint activity to ensure proper cell division. This Arabidopsis thaliana (Mouse-ear cress) protein is Kinetochore protein NDC80 homolog.